The chain runs to 330 residues: Global transcription regulator sge1 (330 aa).

Disordered regions lie at residues 93–123 (PPGE…RNSV) and 239–306 (QYAP…HQPQ). A compositionally biased stretch (polar residues) spans 105 to 114 (GKSTTQSGGI). Over residues 250 to 306 (QQPALQQQPQQQPQPQHQPQLQYQPQPHQHQPQLQYQPQQQHQPQQQYRPQPQHQPQ) the composition is skewed to low complexity.

Belongs to the MIT1/WOR1 family.

It localises to the nucleus. In terms of biological role, global transcriptional regulator of pathogenicity. Acts as an activator of parasitic growth. Not essential for colonization or penetration of the root surface, but required for expression of genes encoding effectors that are secreted during infection. Involved in conidiogenesis, but is not required for conidial fitness, overall (colony) morphology, vegetative growth or carbon source utilization. This chain is Global transcription regulator sge1, found in Fusarium oxysporum f. sp. lycopersici (strain 4287 / CBS 123668 / FGSC 9935 / NRRL 34936) (Fusarium vascular wilt of tomato).